The chain runs to 623 residues: Chaperone protein DnaK (623 aa).

Threonine 175 is subject to Phosphothreonine; by autocatalysis. A disordered region spans residues 580 to 623; it reads PEGAQGAGFDPNNMGGANAGNASAENDKKDDNVVDADYKVEDDK. Residues 591-603 show a composition bias toward low complexity; it reads NNMGGANAGNASA. Over residues 604 to 623 the composition is skewed to basic and acidic residues; sequence ENDKKDDNVVDADYKVEDDK.

The protein belongs to the heat shock protein 70 family.

Acts as a chaperone. This chain is Chaperone protein DnaK, found in Clostridium botulinum (strain Okra / Type B1).